The chain runs to 205 residues: NADH-quinone oxidoreductase subunit I (205 aa).

2 4Fe-4S ferredoxin-type domains span residues 75-104 and 114-143; these read RLLESGNERCIGCGLCEKICISNCIRMETS and HEYTINFGRCIFCGFCAEVCPELAIVHGGR. C84, C87, C90, C94, C123, C126, C129, and C133 together coordinate [4Fe-4S] cluster.

It belongs to the complex I 23 kDa subunit family. NDH-1 is composed of 14 different subunits. Subunits NuoA, H, J, K, L, M, N constitute the membrane sector of the complex. It depends on [4Fe-4S] cluster as a cofactor.

The protein resides in the cell inner membrane. The catalysed reaction is a quinone + NADH + 5 H(+)(in) = a quinol + NAD(+) + 4 H(+)(out). NDH-1 shuttles electrons from NADH, via FMN and iron-sulfur (Fe-S) centers, to quinones in the respiratory chain. The immediate electron acceptor for the enzyme in this species is believed to be ubiquinone. Couples the redox reaction to proton translocation (for every two electrons transferred, four hydrogen ions are translocated across the cytoplasmic membrane), and thus conserves the redox energy in a proton gradient. This chain is NADH-quinone oxidoreductase subunit I, found in Wolinella succinogenes (strain ATCC 29543 / DSM 1740 / CCUG 13145 / JCM 31913 / LMG 7466 / NCTC 11488 / FDC 602W) (Vibrio succinogenes).